The chain runs to 346 residues: Ferredoxin--NADP reductase (346 aa).

The FAD site is built by Glu-35, Gln-43, Tyr-48, Val-88, Phe-122, Asp-287, and Thr-327.

It belongs to the ferredoxin--NADP reductase type 2 family. As to quaternary structure, homodimer. The cofactor is FAD.

The catalysed reaction is 2 reduced [2Fe-2S]-[ferredoxin] + NADP(+) + H(+) = 2 oxidized [2Fe-2S]-[ferredoxin] + NADPH. This chain is Ferredoxin--NADP reductase, found in Oenococcus oeni (strain ATCC BAA-331 / PSU-1).